The primary structure comprises 303 residues: Coenzyme PQQ synthesis protein B (303 aa).

Belongs to the PqqB family.

It functions in the pathway cofactor biosynthesis; pyrroloquinoline quinone biosynthesis. Functionally, may be involved in the transport of PQQ or its precursor to the periplasm. The protein is Coenzyme PQQ synthesis protein B of Pseudomonas syringae pv. tomato (strain ATCC BAA-871 / DC3000).